The primary structure comprises 355 residues: MPVWVASAARAALRALLGHPFEPNQQVVQPDGGEPLLVPVRSAARLSDDQALAISRCDPGPGLDLTRDLEIWVRVAWTPSADQGLVLMPGEGVGRIGAGGDACLSTYARQLLECTLLPLLPPGQGLEVEPVLPRGRSLAERTSNAAFGVVDGLALIGTQAEVQQSAAPEQLEQVLRELRALVADPGFGGSVALVIGENGLDLARRAGLSPLLKVGNWLGPVLVAAAEAGVKDLLLLGYHGKLIKLAGGIFHTHHHLADGRLEVLTALGLDVGLSLEELRHLRAAASVEDAFQRLNPETAMDLGRLLAATVEQRSQAYIARYGDWSLRIAAVLFDRSRTLRWRGPMAEERFFTLQD.

Belongs to the CbiD family.

The catalysed reaction is Co-precorrin-5B + S-adenosyl-L-methionine = Co-precorrin-6A + S-adenosyl-L-homocysteine. Its pathway is cofactor biosynthesis; adenosylcobalamin biosynthesis; cob(II)yrinate a,c-diamide from sirohydrochlorin (anaerobic route): step 6/10. Catalyzes the methylation of C-1 in cobalt-precorrin-5B to form cobalt-precorrin-6A. The protein is Cobalt-precorrin-5B C(1)-methyltransferase of Parasynechococcus marenigrum (strain WH8102).